The sequence spans 401 residues: Lsg locus putative protein 1 (401 aa).

11 helical membrane passes run 8–28, 36–56, 87–107, 132–152, 162–182, 199–219, 237–257, 282–302, 320–340, 352–372, and 374–394; these read VIYL…LPYL, GYGS…VVSL, IIGS…LFYA, SYAF…VALL, KRIL…YFLY, ALFY…SFFL, LGLY…IQAL, WALF…IIPE, FILF…VNYL, CSVL…FTEI, and YIPY…YFMT.

The protein belongs to the polysaccharide synthase family. HI_0867/HI_1700 subfamily.

It is found in the cell membrane. The sequence is that of Lsg locus putative protein 1 from Haemophilus influenzae (strain ATCC 51907 / DSM 11121 / KW20 / Rd).